A 126-amino-acid polypeptide reads, in one-letter code: Glycine cleavage system H protein (126 aa).

A Lipoyl-binding domain is found at 20 to 102 (IGTIGITDYA…LGDGWFFKVR (83 aa)). At lysine 61 the chain carries N6-lipoyllysine.

This sequence belongs to the GcvH family. In terms of assembly, the glycine cleavage system is composed of four proteins: P, T, L and H. It depends on (R)-lipoate as a cofactor.

Functionally, the glycine cleavage system catalyzes the degradation of glycine. The H protein shuttles the methylamine group of glycine from the P protein to the T protein. In Rhodospirillum rubrum (strain ATCC 11170 / ATH 1.1.1 / DSM 467 / LMG 4362 / NCIMB 8255 / S1), this protein is Glycine cleavage system H protein.